The sequence spans 208 residues: Inner membrane-spanning protein YciB (208 aa).

The next 5 membrane-spanning stretches (helical) occupy residues 49–69 (APVL…ILWL), 78–98 (TMLW…IYFH), 105–125 (WKPT…ELVF), 150–170 (FSWV…AFNF), and 178–198 (FKLF…AFFL).

It belongs to the YciB family.

Its subcellular location is the cell inner membrane. Functionally, plays a role in cell envelope biogenesis, maintenance of cell envelope integrity and membrane homeostasis. The polypeptide is Inner membrane-spanning protein YciB (Polaromonas naphthalenivorans (strain CJ2)).